The following is a 639-amino-acid chain: Versicolorin B synthase stcN (639 aa).

The first 19 residues, 1–19 (MPAWSLLVLSALPVVGMFA), serve as a signal peptide directing secretion. Residues 77–78 (TA) and 98–99 (EA) contribute to the FAD site. Residue asparagine 109 is glycosylated (N-linked (GlcNAc...) asparagine). 164-167 (GAML) contacts FAD. Asparagine 214 carries an N-linked (GlcNAc...) asparagine glycan. Residues 263-301 (GFSNGQLLGRSYITHTIHPKTRRRDTASTSYLQTALRTS) form the PAS domain. Residues asparagine 444 and asparagine 501 are each glycosylated (N-linked (GlcNAc...) asparagine). Residues alanine 609 and 620-621 (PM) each bind FAD.

This sequence belongs to the GMC oxidoreductase family. As to quaternary structure, homodimer. Requires FAD as cofactor.

It localises to the cytoplasm. The protein localises to the cytosol. The enzyme catalyses (2S-3S)-versiconal hemiacetal = versicolorin B + H2O. It catalyses the reaction (S)-5'-oxoaverantin + H(+) = (1'S,5'S)-averufin + H2O. Its pathway is mycotoxin biosynthesis; sterigmatocystin biosynthesis. Functionally, norsolorinic acid reductase; part of the gene cluster that mediates the biosynthesis of sterigmatocystin (ST), a polyketide-derived furanocoumarin which is part of the most toxic and carcinogenic compounds among the known mycotoxins. The first step in the biosynthesis of sterigmatocystin is the production of hexanoate by the fatty acid synthase (FAS) units stcJ and stcK. The polyketide backbone is assembled by the non-reducing polyketide synthase stcA by condensation of the starter hexanoyl-CoA and 7 malonyl-CoA extender units followed by cyclization and release of norsolorinic acid. Norsolorinic acid is the first stable intermediate in the biosynthesis of sterigmatocystin and is converted into averantin (AVN) by the ketoreductase stcE which reduces the hexanoate ketone to an alcohol. Averantin is then oxidized into 5'-hydroxyaverantin (HAVN) by the cytochrome P450 monooxygenase stcF. 5'-hydroxyaverantin is further converted to 5'-oxyaverantin (OAVN) by the 5'-hydroxyaverantin dehydrogenase stcG. The next step is the conversion of OAVN into averufin (AVF) which is catalyzed by a yet to be identified enzyme. The cytochrome P450 monooxygenase stcB and the flavin-binding monooxygenase stcW are both required for the conversion of averufin to 1-hydroxyversicolorone. The esterase stcI probably catalyzes the formation of versiconal hemiacetal acetate from 1-hydroxyversicolorone. The oxydoreductase stcN then probably catalyzes the biosynthetic step from versiconal to versicolorin B (VERB). The next step is performed by the versicolorin B desaturase stcL to produce versicolorin A (VERA). The ketoreductase stcU and the cytochrome P450 monooxygenase stcS are involved in the conversion of versicolorin A to demethylsterigmatocystin. The Baeyer-Villiger oxidas stcQ and the reductase stcR might be involved in the biosynthetic step from versicolorin A to demethylsterigmatocystin. The final step in the biosynthesis of sterigmatocystin is the methylation of demethylsterigmatocystin catalyzed by the methyltransferase stcP. In Emericella nidulans (strain FGSC A4 / ATCC 38163 / CBS 112.46 / NRRL 194 / M139) (Aspergillus nidulans), this protein is Versicolorin B synthase stcN.